A 62-amino-acid polypeptide reads, in one-letter code: Large ribosomal subunit protein bL28 (62 aa).

A disordered region spans residues 1 to 27 (MARKCVVTGRQTRSGNQRSHAMNSNKR). The span at 9–26 (GRQTRSGNQRSHAMNSNK) shows a compositional bias: polar residues.

The protein belongs to the bacterial ribosomal protein bL28 family.

The polypeptide is Large ribosomal subunit protein bL28 (Oceanobacillus iheyensis (strain DSM 14371 / CIP 107618 / JCM 11309 / KCTC 3954 / HTE831)).